The sequence spans 284 residues: P2R1A-PPP2R2A-interacting phosphatase regulator 1 (284 aa).

The disordered stretch occupies residues 1 to 65; it reads MAQEKMELDL…RRNSTTFPSR (65 aa). The segment covering 20–29 has biased composition (gly residues); that stretch reads EGGGPGGGGL. A Phosphoserine modification is found at Ser32. Position 34 is a phosphoserine; by CHEK1 (Ser34). A phosphoserine mark is found at Ser42, Ser45, Ser59, and Ser73. A Glycyl lysine isopeptide (Lys-Gly) (interchain with G-Cter in SUMO1) cross-link involves residue Lys86. Residues Ser140 and Ser144 each carry the phosphoserine modification. Residue Thr146 is modified to Phosphothreonine. The segment at 164-185 is disordered; it reads SNGLPPSPIPSPTTRFTTRRSQ. Over residues 175–185 the composition is skewed to low complexity; that stretch reads PTTRFTTRRSQ. A phosphoserine mark is found at Ser184 and Ser186. Positions 233–284 are disordered; it reads GVCVSSDTLDGNSSSAGSSCNSPAKVSTTTDSPVSPAQAASPFIPVDELSSK. Residues 243–254 show a composition bias toward low complexity; that stretch reads GNSSSAGSSCNS. Polar residues predominate over residues 256-267; sequence AKVSTTTDSPVS. Ser264, Ser267, and Ser273 each carry phosphoserine.

This sequence belongs to the FAM122 family. As to quaternary structure, interacts with PPP2CA and PPP2R1A. Interacts (via its N-terminus) with PPP2R2A; the interaction is direct and this interaction inhibits PP2A activity. The CHEK1-mediated Ser-34 phosphorylated form interacts with 14-3-3 proteins. CHEK1-mediated phosphorylation at Ser-34 negatively regulates its ability to inhibit serine/threonine-protein phosphatase 2A (PP2A) activity. Phosphorylation leads to its release from the PP2A complex and its sequestration by 14-3-3 proteins in the cytoplasm resulting in its inability to translocate to the nucleus, where it otherwise inhibits PP2A.

Its subcellular location is the nucleus. The protein localises to the cytoplasm. In terms of biological role, acts as an inhibitor of serine/threonine-protein phosphatase 2A (PP2A) activity. Inhibits PP2A activity by blocking the substrate binding site on PPP2R2A and the active site of PPP2CA. Potentiates ubiquitin-mediated proteasomal degradation of serine/threonine-protein phosphatase 2A catalytic subunit alpha (PPP2CA). Inhibits PP2A-mediated dephosphorylation of WEE1, promoting ubiquitin-mediated proteolysis of WEE1, thereby releasing G2/M checkpoint. The polypeptide is P2R1A-PPP2R2A-interacting phosphatase regulator 1 (Mus musculus (Mouse)).